The following is a 323-amino-acid chain: AA9 family lytic polysaccharide monooxygenase A (323 aa).

An N-terminal signal peptide occupies residues 1–19; sequence MKSFISLLGLSFLTCHASA. Residues histidine 20 and histidine 90 each coordinate Cu(2+). A disulfide bond links cysteine 59 and cysteine 175. O2 contacts are provided by histidine 161 and glutamine 170. Tyrosine 172 is a Cu(2+) binding site. N-linked (GlcNAc...) asparagine glycosylation occurs at asparagine 215. Residues 287-323 enclose the CBM1 domain; sequence AVVQKFGQCGGQGWTGGTTCVAGSTCTATNAYYSQCL.

The protein belongs to the polysaccharide monooxygenase AA9 family. Requires Cu(2+) as cofactor.

The protein resides in the secreted. The catalysed reaction is [(1-&gt;4)-beta-D-glucosyl]n+m + reduced acceptor + O2 = 4-dehydro-beta-D-glucosyl-[(1-&gt;4)-beta-D-glucosyl]n-1 + [(1-&gt;4)-beta-D-glucosyl]m + acceptor + H2O.. Lytic polysaccharide monooxygenase (LPMO) that depolymerizes crystalline and amorphous polysaccharides via the oxidation of scissile alpha- or beta-(1-4)-glycosidic bonds, yielding C1 and C4 oxidation products. Catalysis by LPMOs requires the reduction of the active-site copper from Cu(II) to Cu(I) by a reducing agent and H(2)O(2) or O(2) as a cosubstrate. The chain is AA9 family lytic polysaccharide monooxygenase A from Botryotinia fuckeliana (strain B05.10) (Noble rot fungus).